A 633-amino-acid chain; its full sequence is Probable methyltransferase PMT15 (633 aa).

Over 1 to 24 (MGNYRWPSKLSKLSLRAKQTNLYR) the chain is Cytoplasmic. The helical; Signal-anchor for type II membrane protein transmembrane segment at 25-45 (VILIAILCVTFYFVGVWQHSG) threads the bilayer. Residues 46–633 (RGISRSSISN…APAPDQSSDP (588 aa)) lie on the Lumenal side of the membrane. N-linked (GlcNAc...) asparagine glycosylation is found at Asn113 and Asn298.

It belongs to the methyltransferase superfamily.

Its subcellular location is the golgi apparatus membrane. This is Probable methyltransferase PMT15 from Arabidopsis thaliana (Mouse-ear cress).